The following is a 601-amino-acid chain: Aspartate--tRNA(Asp/Asn) ligase (601 aa).

L-aspartate is bound at residue Glu-173. The tract at residues 197 to 200 is aspartate; that stretch reads QLFK. Arg-219 is a binding site for L-aspartate. ATP-binding positions include 219 to 221 and Gln-228; that span reads RDE. His-456 contributes to the L-aspartate binding site. Glu-490 serves as a coordination point for ATP. Arg-497 is an L-aspartate binding site. 542–545 serves as a coordination point for ATP; that stretch reads GWDR. The segment at 566-601 is disordered; that stretch reads GGGYDPLTQAPAPITAEQRRESGVDAVPDDETAPQA. Positions 592–601 are enriched in acidic residues; the sequence is VPDDETAPQA.

This sequence belongs to the class-II aminoacyl-tRNA synthetase family. Type 1 subfamily. In terms of assembly, homodimer.

The protein resides in the cytoplasm. The enzyme catalyses tRNA(Asx) + L-aspartate + ATP = L-aspartyl-tRNA(Asx) + AMP + diphosphate. Its function is as follows. Aspartyl-tRNA synthetase with relaxed tRNA specificity since it is able to aspartylate not only its cognate tRNA(Asp) but also tRNA(Asn). Reaction proceeds in two steps: L-aspartate is first activated by ATP to form Asp-AMP and then transferred to the acceptor end of tRNA(Asp/Asn). The chain is Aspartate--tRNA(Asp/Asn) ligase from Beutenbergia cavernae (strain ATCC BAA-8 / DSM 12333 / CCUG 43141 / JCM 11478 / NBRC 16432 / NCIMB 13614 / HKI 0122).